We begin with the raw amino-acid sequence, 332 residues long: GDP-mannose transporter 2 (332 aa).

Topologically, residues 1–12 (MSSLKVSQQDKK) are cytoplasmic. The helical transmembrane segment at 13–33 (WVNSGSVAILAYCASSILMTI) threads the bilayer. Over 34 to 47 (TNKVVMSDRTFNMN) the chain is Lumenal. Residues 48–68 (FLLLFIQSLVCVITLLVLKVL) form a helical membrane-spanning segment. The Cytoplasmic segment spans residues 69–84 (GSVNFRSFNKTDARNW). Residues 85 to 105 (FPISICLVLMIFTSSKSLQYL) traverse the membrane as a helical segment. Over 106–108 (SVP) the chain is Lumenal. A helical transmembrane segment spans residues 109 to 129 (VYTIFKNLTIIVIAYGEVLFF). Topologically, residues 130 to 131 (GS) are cytoplasmic. Residues 132–152 (SVGNMELGSFALMIVSSLIAA) form a helical membrane-spanning segment. At 153–174 (HGDYLHSVERLKKMLGPNVSFS) the chain is on the lumenal side. A glycan (N-linked (GlcNAc...) asparagine) is linked at Asn170. Residues 175–195 (FIVNIGYFWIAANCFASALFV) form a helical membrane-spanning segment. The Cytoplasmic segment spans residues 196–211 (LLMRKRIQVTNFKDFD). A helical transmembrane segment spans residues 212-232 (TMFYNNVLSLPLLLLGSYLFE). The Lumenal segment spans residues 233–248 (DWSQENLLPHVDIDNL). Asn247 is a glycosylation site (N-linked (GlcNAc...) asparagine). A helical membrane pass occupies residues 249–269 (STMIISGLASVAISYCSGWCV). The Cytoplasmic portion of the chain corresponds to 270-274 (RVTSS). A helical membrane pass occupies residues 275-295 (TTYSMVGALNKLPIALTGFLF). Residues 296–300 (NDAAR) lie on the Lumenal side of the membrane. The helical transmembrane segment at 301-321 (NLSSAASILLGFASGIIYAVA) threads the bilayer. At 322–332 (KQKKLQNSEKI) the chain is on the cytoplasmic side.

This sequence belongs to the TPT transporter family. SLC35D subfamily. In terms of assembly, homooligomer.

Its subcellular location is the golgi apparatus membrane. The protein resides in the cytoplasmic vesicle membrane. It is found in the endoplasmic reticulum membrane. In terms of biological role, involved in the import of GDP-mannose from the cytoplasm into the Golgi lumen. This is GDP-mannose transporter 2 (VRG4-2) from Vanderwaltozyma polyspora (strain ATCC 22028 / DSM 70294 / BCRC 21397 / CBS 2163 / NBRC 10782 / NRRL Y-8283 / UCD 57-17) (Kluyveromyces polysporus).